Here is a 402-residue protein sequence, read N- to C-terminus: Probable 2,3-bisphosphoglycerate-independent phosphoglycerate mutase (402 aa).

It belongs to the BPG-independent phosphoglycerate mutase family. A-PGAM subfamily.

It catalyses the reaction (2R)-2-phosphoglycerate = (2R)-3-phosphoglycerate. It participates in carbohydrate degradation; glycolysis; pyruvate from D-glyceraldehyde 3-phosphate: step 3/5. Its function is as follows. Catalyzes the interconversion of 2-phosphoglycerate and 3-phosphoglycerate. The chain is Probable 2,3-bisphosphoglycerate-independent phosphoglycerate mutase from Thermosipho melanesiensis (strain DSM 12029 / CIP 104789 / BI429).